The primary structure comprises 316 residues: uncharacterized protein (316 aa).

Positions 1–56 (MATLSDVAKKANVSKMTVSRVINHPETVTDELKKLVHSAMKELNYIPNYAARALVQ) constitute an HTH lacI-type domain. Positions 4–23 (LSDVAKKANVSKMTVSRVIN) form a DNA-binding region, H-T-H motif.

This is an uncharacterized protein from Bacillus subtilis (strain 168).